The following is a 447-amino-acid chain: UPF0210 protein LSEI_0897 (447 aa).

Belongs to the UPF0210 family. In terms of assembly, homodimer.

The protein is UPF0210 protein LSEI_0897 of Lacticaseibacillus paracasei (strain ATCC 334 / BCRC 17002 / CCUG 31169 / CIP 107868 / KCTC 3260 / NRRL B-441) (Lactobacillus paracasei).